The primary structure comprises 658 residues: Pentatricopeptide repeat-containing protein 7, mitochondrial (658 aa).

The transit peptide at 1 to 29 directs the protein to the mitochondrion; that stretch reads MRNCVSPLLFAWTKHLRLREFKIPFPNRL. PPR repeat units follow at residues 130 to 164 and 220 to 254; these read VKKR…TPIW and LYVE…SESL.

It is found in the mitochondrion. Mitochondrial RNA-binding protein required for the stability of the atp6 mRNA. This chain is Pentatricopeptide repeat-containing protein 7, mitochondrial (ppr7), found in Schizosaccharomyces pombe (strain 972 / ATCC 24843) (Fission yeast).